A 672-amino-acid chain; its full sequence is Ubiquitin carboxyl-terminal hydrolase 19 (672 aa).

Residues 11–31 form a helical membrane-spanning segment; it reads NSFTQLILTLFFVSIGLLYFV. Positions 64, 67, 75, 78, 84, 88, 97, and 101 each coordinate Zn(2+). The segment at 64–101 adopts an MYND-type zinc-finger fold; it reads CSVCGKATTKKCSRCKSVRYCSAACQTSDWKSGHKLKC. A USP domain is found at 174–480; it reads CGLTNCGNSC…RAYMLLYSRV (307 aa). The active-site Nucleophile is the cysteine 183. The Proton acceptor role is filled by histidine 439. Positions 484-672 are disordered; sequence PSNLRSEESQ…HSDTEMIDAQ (189 aa). Residues 488–499 show a composition bias toward basic and acidic residues; sequence RSEESQDEKKTD. The span at 500–527 shows a compositional bias: polar residues; sequence TLNTESNQDGSVESSGVGTNDTSVSSLC. 2 stretches are compositionally biased toward basic and acidic residues: residues 533 to 543 and 553 to 594; these read HSEDPEYEKES and EEGK…KEDP. Positions 606 to 615 are enriched in polar residues; sequence LDITTPSPSA. The span at 623–666 shows a compositional bias: basic and acidic residues; the sequence is ENERSDTESKPLEKEHSDTESNKPLEKEHLDSESKPLEKEHSDT.

It belongs to the peptidase C19 family.

It localises to the membrane. It catalyses the reaction Thiol-dependent hydrolysis of ester, thioester, amide, peptide and isopeptide bonds formed by the C-terminal Gly of ubiquitin (a 76-residue protein attached to proteins as an intracellular targeting signal).. Its function is as follows. Recognizes and hydrolyzes the peptide bond at the C-terminal Gly of ubiquitin. Involved in the processing of poly-ubiquitin precursors as well as that of ubiquitinated proteins. This is Ubiquitin carboxyl-terminal hydrolase 19 (UBP19) from Arabidopsis thaliana (Mouse-ear cress).